The chain runs to 71 residues: Small ribosomal subunit protein eS17 (71 aa).

The protein belongs to the eukaryotic ribosomal protein eS17 family.

The chain is Small ribosomal subunit protein eS17 from Pyrobaculum islandicum (strain DSM 4184 / JCM 9189 / GEO3).